Here is a 690-residue protein sequence, read N- to C-terminus: Serotransferrin (690 aa).

A signal peptide spans 1–17 (MKPLLLLTLLGCLAAAL). 2 consecutive Transferrin-like domains span residues 24-329 (VKWC…SLKK) and 340-670 (IKWC…SLRK). Cys-27 and Cys-49 are joined by a disulfide. Positions 73 and 103 each coordinate Fe(3+). 3 cysteine pairs are disulfide-bonded: Cys-126–Cys-206, Cys-171–Cys-185, and Cys-234–Cys-248. Positions 128, 132, 134, and 135 each coordinate hydrogencarbonate. Tyr-200 contributes to the Fe(3+) binding site. His-256 provides a ligand contact to Fe(3+). Intrachain disulfides connect Cys-343–Cys-379 and Cys-353–Cys-370. The Fe(3+) site is built by Asp-394 and Tyr-429. Intrachain disulfides connect Cys-404-Cys-682, Cys-419-Cys-643, Cys-452-Cys-530, Cys-476-Cys-671, Cys-486-Cys-499, Cys-496-Cys-513, and Cys-570-Cys-584. Residues Thr-454, Arg-458, Ala-460, and Gly-461 each coordinate hydrogencarbonate. Fe(3+) is bound at residue Tyr-524. Residue His-592 coordinates Fe(3+).

The protein belongs to the transferrin family. In terms of assembly, monomer.

Its subcellular location is the secreted. Transferrins are iron binding transport proteins which can bind two Fe(3+) ions in association with the binding of an anion, usually bicarbonate. The protein is Serotransferrin (tf) of Oryzias latipes (Japanese rice fish).